Reading from the N-terminus, the 214-residue chain is Octanoyltransferase (214 aa).

The 176-residue stretch at 28-203 (GSGAETLLLL…RFEGFLDEFM (176 aa)) folds into the BPL/LPL catalytic domain. Substrate-binding positions include 66–73 (RGGDVTYH), 133–135 (SIG), and 146–148 (GFA). The Acyl-thioester intermediate role is filled by Cys164.

The protein belongs to the LipB family.

The protein resides in the cytoplasm. The enzyme catalyses octanoyl-[ACP] + L-lysyl-[protein] = N(6)-octanoyl-L-lysyl-[protein] + holo-[ACP] + H(+). Its pathway is protein modification; protein lipoylation via endogenous pathway; protein N(6)-(lipoyl)lysine from octanoyl-[acyl-carrier-protein]: step 1/2. Its function is as follows. Catalyzes the transfer of endogenously produced octanoic acid from octanoyl-acyl-carrier-protein onto the lipoyl domains of lipoate-dependent enzymes. Lipoyl-ACP can also act as a substrate although octanoyl-ACP is likely to be the physiological substrate. The chain is Octanoyltransferase from Geotalea uraniireducens (strain Rf4) (Geobacter uraniireducens).